The following is a 304-amino-acid chain: tRNA-uridine aminocarboxypropyltransferase 1 (304 aa).

The residue at position 2 (Ser2) is an N-acetylserine. A DXTW motif is present at residues 206–209 (DSTW).

It belongs to the TDD superfamily. DTWD1 family.

Its subcellular location is the nucleus. It catalyses the reaction a uridine in tRNA + S-adenosyl-L-methionine = a 3-[(3S)-3-amino-3-carboxypropyl]uridine in tRNA + S-methyl-5'-thioadenosine + H(+). Functionally, catalyzes the formation of 3-(3-amino-3-carboxypropyl)uridine (acp3U) at position 20 in the D-loop of several cytoplasmic tRNAs (acp3U(20)). In Homo sapiens (Human), this protein is tRNA-uridine aminocarboxypropyltransferase 1.